We begin with the raw amino-acid sequence, 129 residues long: Cocaine- and amphetamine-regulated transcript protein (129 aa).

The signal sequence occupies residues 1 to 27 (MESSRLRLLPLLGAALLLLLPLLGARA). Residue tyrosine 41 is modified to Phosphotyrosine. Serine 48 carries the phosphoserine modification. Disulfide bonds link cysteine 95-cysteine 113, cysteine 101-cysteine 121, and cysteine 115-cysteine 128.

The protein belongs to the CART family.

The protein localises to the secreted. Functionally, satiety factor closely associated with the actions of leptin and neuropeptide y; this anorectic peptide inhibits both normal and starvation-induced feeding and completely blocks the feeding response induced by neuropeptide Y and regulated by leptin in the hypothalamus. The sequence is that of Cocaine- and amphetamine-regulated transcript protein (Cartpt) from Mus musculus (Mouse).